We begin with the raw amino-acid sequence, 1437 residues long: Histone-lysine N-methyltransferase NSD3 (1437 aa).

Disordered stretches follow at residues 121–157 (PHEILEKPSPPQPPPPPSVPQTVIPKKTGSPEIKLKI) and 181–252 (QASE…PVQP). Pro residues predominate over residues 128 to 139 (PSPPQPPPPPSV). S150 is modified (phosphoserine). Residues 154–157 (KLKI) carry the KIKL motif. Basic residues predominate over residues 187-201 (KSKHESRKEKRKKSN). The segment covering 202 to 248 (KHDSSRSEERKSHKIPKLEPEEQNRPNERVDTVSEKPREEPVLKEEA) has biased composition (basic and acidic residues). Residues K218 and K245 each participate in a glycyl lysine isopeptide (Lys-Gly) (interchain with G-Cter in SUMO2) cross-link. One can recognise a PWWP 1 domain in the interval 270-333 (VGDLVWSKVG…EKRVREYKGH (64 aa)). Disordered stretches follow at residues 344–365 (TKQASNHSEKQKIRKPRPQRER) and 406–465 (AKKS…EPPP). K413 is covalently cross-linked (Glycyl lysine isopeptide (Lys-Gly) (interchain with G-Cter in SUMO2)). Residues 425-445 (VLNTQPEQTNAGEVASSLSST) show a composition bias toward polar residues. A Phosphoserine modification is found at S457. Residues K502 and K532 each participate in a glycyl lysine isopeptide (Lys-Gly) (interchain with G-Cter in SUMO2) cross-link. The segment at 540 to 696 (QDRLIISTPN…DSSLSRRGTG (157 aa)) is disordered. A compositionally biased stretch (polar residues) spans 546–571 (STPNQRNEKPTQSVSSPEATSGSTGS). Basic and acidic residues predominate over residues 583–595 (TRSESEKSTEVVP). 3 positions are modified to phosphoserine: S585, S587, and S590. K628 is covalently cross-linked (Glycyl lysine isopeptide (Lys-Gly) (interchain with G-Cter in SUMO2)). Position 655 is a phosphoserine (S655). The segment covering 682–692 (DVQSMDSSLSR) has biased composition (polar residues). 3 PHD-type zinc fingers span residues 701–748 (DTVC…CKTG), 749–805 (QHPC…CSME), and 862–955 (VGFC…CKAG). K790 carries the post-translational modification N6-acetyllysine. Residues 960 to 1022 (YKQIVWVKLG…QGRVFPYVEG (63 aa)) enclose the PWWP 2 domain. Residues 1033-1069 (INKTFKKALEEAAKRFQELKAQRESKEALEIEKNSRK) are a coiled coil. In terms of domain architecture, AWS spans 1093–1143 (SEIPRCNCKPADENPCGLESECLNRMLQYECHPQVCPAGDRCQNQCFTKRL). Residues 1145–1262 (PDAEIIKTER…AGMELTFNYN (118 aa)) form the SET domain. K1151 is covalently cross-linked (Glycyl lysine isopeptide (Lys-Gly) (interchain with G-Cter in SUMO2)). The Post-SET domain occupies 1269–1285 (GRTECHCGADNCSGFLG). A PHD-type 4; atypical zinc finger spans residues 1321-1368 (EDYCFQCGDGGELVMCDKKDCPKAYHLLCLNLTQPPYGKWECPWHQCD).

It belongs to the class V-like SAM-binding methyltransferase superfamily. Histone-lysine methyltransferase family. SET2 subfamily. As to quaternary structure, interacts with BRD4. Interacts (via KIKL motif) with BRD3 (via NET domain). Highly expressed in brain, heart and skeletal muscle. Expressed at lower level in liver and lung.

The protein localises to the nucleus. It is found in the chromosome. It catalyses the reaction L-lysyl(4)-[histone H3] + 2 S-adenosyl-L-methionine = N(6),N(6)-dimethyl-L-lysyl(4)-[histone H3] + 2 S-adenosyl-L-homocysteine + 2 H(+). The catalysed reaction is L-lysyl(27)-[histone H3] + 2 S-adenosyl-L-methionine = N(6),N(6)-dimethyl-L-lysyl(27)-[histone H3] + 2 S-adenosyl-L-homocysteine + 2 H(+). Histone methyltransferase. Preferentially dimethylates 'Lys-4' and 'Lys-27' of histone H3 forming H3K4me2 and H3K27me2. H3 'Lys-4' methylation represents a specific tag for epigenetic transcriptional activation, while 'Lys-27' is a mark for transcriptional repression. In Homo sapiens (Human), this protein is Histone-lysine N-methyltransferase NSD3.